We begin with the raw amino-acid sequence, 86 residues long: MNILFVLSSVPHTSPWSTQVAMVMITCNLLAIVAGRYAIKVRGLGPSIPVSGVEGFGLPELLATTSLGHVIGAASILGLSNVGLIS.

Residues 15-34 (PWSTQVAMVMITCNLLAIVA) form a helical membrane-spanning segment.

The protein belongs to the PsaG/PsaK family.

Its subcellular location is the plastid. It is found in the chloroplast thylakoid membrane. The sequence is that of Photosystem I reaction center subunit PsaK from Pyropia yezoensis (Susabi-nori).